The sequence spans 101 residues: uncharacterized protein (101 aa).

Over residues 1 to 11 the composition is skewed to basic and acidic residues; it reads MSDEGYRELVE. The interval 1-26 is disordered; it reads MSDEGYRELVESKSAPTTPGPWSPDR.

This is an uncharacterized protein from Torque teno canis virus (isolate Cf-TTV10).